A 433-amino-acid polypeptide reads, in one-letter code: Pyrimidine-nucleoside phosphorylase (433 aa).

81 to 83 (KHS) is a phosphate binding site. The K(+) site is built by Gly-88 and Thr-90. Residues Thr-92, 108-110 (KMS), and Thr-120 each bind phosphate. Arg-168 and Lys-187 together coordinate substrate. The K(+) site is built by Leu-243, Ala-246, and Glu-255.

This sequence belongs to the thymidine/pyrimidine-nucleoside phosphorylase family. As to quaternary structure, homodimer. K(+) serves as cofactor.

It catalyses the reaction uridine + phosphate = alpha-D-ribose 1-phosphate + uracil. It carries out the reaction thymidine + phosphate = 2-deoxy-alpha-D-ribose 1-phosphate + thymine. The enzyme catalyses 2'-deoxyuridine + phosphate = 2-deoxy-alpha-D-ribose 1-phosphate + uracil. In terms of biological role, catalyzes phosphorolysis of the pyrimidine nucleosides uridine, thymidine and 2'-deoxyuridine with the formation of the corresponding pyrimidine base and ribose-1-phosphate. This chain is Pyrimidine-nucleoside phosphorylase (pdp), found in Geobacillus stearothermophilus (Bacillus stearothermophilus).